The primary structure comprises 47 residues: Large ribosomal subunit protein eL40 (47 aa).

The protein belongs to the eukaryotic ribosomal protein eL40 family.

The sequence is that of Large ribosomal subunit protein eL40 from Methanococcus aeolicus (strain ATCC BAA-1280 / DSM 17508 / OCM 812 / Nankai-3).